Here is a 506-residue protein sequence, read N- to C-terminus: Light-independent protochlorophyllide reductase subunit B (506 aa).

Aspartate 36 contacts [4Fe-4S] cluster. The Proton donor role is filled by aspartate 279. Position 414 to 415 (414 to 415 (GL)) interacts with substrate.

This sequence belongs to the ChlB/BchB/BchZ family. In terms of assembly, protochlorophyllide reductase is composed of three subunits; BchL, BchN and BchB. Forms a heterotetramer of two BchB and two BchN subunits. It depends on [4Fe-4S] cluster as a cofactor.

The enzyme catalyses chlorophyllide a + oxidized 2[4Fe-4S]-[ferredoxin] + 2 ADP + 2 phosphate = protochlorophyllide a + reduced 2[4Fe-4S]-[ferredoxin] + 2 ATP + 2 H2O. The protein operates within porphyrin-containing compound metabolism; bacteriochlorophyll biosynthesis (light-independent). In terms of biological role, component of the dark-operative protochlorophyllide reductase (DPOR) that uses Mg-ATP and reduced ferredoxin to reduce ring D of protochlorophyllide (Pchlide) to form chlorophyllide a (Chlide). This reaction is light-independent. The NB-protein (BchN-BchB) is the catalytic component of the complex. The polypeptide is Light-independent protochlorophyllide reductase subunit B (Methylobacterium sp. (strain 4-46)).